The following is a 267-amino-acid chain: Membrane-spanning 4-domains subfamily A member 12 (267 aa).

The Cytoplasmic portion of the chain corresponds to Met-1 to Leu-91. Residues Gly-92 to Ile-112 traverse the membrane as a helical segment. Residues Ser-113 to Leu-120 are Extracellular-facing. The chain crosses the membrane as a helical span at residues Gly-121 to Ile-141. Topologically, residues Ser-142–Gly-160 are cytoplasmic. Residues Ser-161 to Val-181 traverse the membrane as a helical segment. Residues Asp-182–Lys-200 lie on the Extracellular side of the membrane. The chain crosses the membrane as a helical span at residues Gly-201 to Ala-221. The Cytoplasmic portion of the chain corresponds to His-222 to Lys-267. The tract at residues Thr-248–Lys-267 is disordered.

It belongs to the MS4A family.

The protein resides in the membrane. Its function is as follows. May be involved in signal transduction as a component of a multimeric receptor complex. The sequence is that of Membrane-spanning 4-domains subfamily A member 12 (MS4A12) from Homo sapiens (Human).